A 479-amino-acid polypeptide reads, in one-letter code: Endoglucanase 20 (479 aa).

A signal peptide spans 1–21 (MGKLLVLMLVGMFLAFESLEA). Asn-29 carries an N-linked (GlcNAc...) asparagine glycan. Asp-76 acts as the Nucleophile in catalysis. His-398 is a catalytic residue. Asn-442 is a glycosylation site (N-linked (GlcNAc...) asparagine). Residues Asp-449 and Glu-458 contribute to the active site.

Belongs to the glycosyl hydrolase 9 (cellulase E) family.

The protein localises to the secreted. It catalyses the reaction Endohydrolysis of (1-&gt;4)-beta-D-glucosidic linkages in cellulose, lichenin and cereal beta-D-glucans.. The chain is Endoglucanase 20 from Arabidopsis thaliana (Mouse-ear cress).